A 145-amino-acid polypeptide reads, in one-letter code: Deoxyuridine 5'-triphosphate nucleotidohydrolase (145 aa).

Residues 65–67, Asn78, 82–84, and Lys92 contribute to the substrate site; these read RSG and TID.

Belongs to the dUTPase family. Mg(2+) is required as a cofactor.

The catalysed reaction is dUTP + H2O = dUMP + diphosphate + H(+). The protein operates within pyrimidine metabolism; dUMP biosynthesis; dUMP from dCTP (dUTP route): step 2/2. This enzyme is involved in nucleotide metabolism: it produces dUMP, the immediate precursor of thymidine nucleotides and it decreases the intracellular concentration of dUTP so that uracil cannot be incorporated into DNA. This is Deoxyuridine 5'-triphosphate nucleotidohydrolase from Syntrophomonas wolfei subsp. wolfei (strain DSM 2245B / Goettingen).